Here is a 134-residue protein sequence, read N- to C-terminus: Arsenate reductase (134 aa).

Active-site nucleophile residues include cysteine 11, cysteine 83, and cysteine 90. Disulfide bonds link cysteine 11/cysteine 83 and cysteine 83/cysteine 90.

It belongs to the low molecular weight phosphotyrosine protein phosphatase family. Thioredoxin-coupled ArsC subfamily.

It localises to the cytoplasm. The catalysed reaction is arsenate + [thioredoxin]-dithiol + H(+) = arsenite + [thioredoxin]-disulfide + H2O. Its function is as follows. Catalyzes the reduction of arsenate [As(V)] to arsenite [As(III)]. This is Arsenate reductase from Bacillus cereus (strain AH187).